The chain runs to 395 residues: Elongation factor Tu (395 aa).

The tr-type G domain maps to 10–205 (KPHVNIGTIG…VDNWIPIPPR (196 aa)). Positions 19–26 (GHVDHGKT) are G1. GTP is bound at residue 19–26 (GHVDHGKT). Thr-26 is a binding site for Mg(2+). The tract at residues 60–64 (GITIN) is G2. The segment at 81–84 (DCPG) is G3. GTP is bound by residues 81-85 (DCPGH) and 136-139 (NKVD). Residues 136-139 (NKVD) are G4. Residues 174–176 (SAL) form a G5 region.

This sequence belongs to the TRAFAC class translation factor GTPase superfamily. Classic translation factor GTPase family. EF-Tu/EF-1A subfamily. As to quaternary structure, monomer.

It localises to the cytoplasm. It carries out the reaction GTP + H2O = GDP + phosphate + H(+). Functionally, GTP hydrolase that promotes the GTP-dependent binding of aminoacyl-tRNA to the A-site of ribosomes during protein biosynthesis. This chain is Elongation factor Tu, found in Hymenobacter ocellatus (Parahymenobacter ocellatus).